The following is a 1025-amino-acid chain: Leucyl-cystinyl aminopeptidase (1025 aa).

At Met1 the chain carries N-acetylmethionine. Over 1 to 109 the chain is Cytoplasmic; the sequence is MESFTNDRLQ…DGTCSLPSAR (109 aa). The Dileucine internalization motif signature appears at 53–54; it reads LL. Tyr70 carries the post-translational modification Phosphotyrosine. Positions 76 to 77 match the Dileucine internalization motif motif; sequence LL. A phosphoserine mark is found at Ser80 and Ser91. Residues 96 to 101 form a tankyrase binding region; sequence RQSPDG. A helical; Signal-anchor for type II membrane protein transmembrane segment spans residues 110–131; sequence TLVICVFVIVVAVSVIMVIYLL. Residues 132–1025 lie on the Extracellular side of the membrane; sequence PRCTFTKEGC…RNLKTLSQWL (894 aa). Asn145, Asn184, Asn215, Asn256, and Asn266 each carry an N-linked (GlcNAc...) asparagine glycan. Residue Glu295 coordinates substrate. Residues Asn368 and Asn374 are each glycosylated (N-linked (GlcNAc...) asparagine). 428–432 serves as a coordination point for substrate; it reads GAMEN. Asn447 carries an N-linked (GlcNAc...) asparagine glycan. His464 is a Zn(2+) binding site. The Proton acceptor role is filled by Glu465. The Zn(2+) site is built by His468 and Glu487. N-linked (GlcNAc...) asparagine glycans are attached at residues Asn525, Asn578, Asn664, Asn682, Asn695, Asn758, Asn834, Asn850, and Asn989.

Belongs to the peptidase M1 family. In terms of assembly, homodimer. Binds tankyrases 1 and 2. Zn(2+) serves as cofactor.

It localises to the cell membrane. The protein localises to the endomembrane system. It carries out the reaction Release of an N-terminal amino acid, Cys-|-Xaa-, in which the half-cystine residue is involved in a disulfide loop, notably in oxytocin or vasopressin. Hydrolysis rates on a range of aminoacyl arylamides exceed that for the cystinyl derivative, however.. Its function is as follows. Release of an N-terminal amino acid, cleave before cysteine, leucine as well as other amino acids. Degrades peptide hormones such as oxytocin, vasopressin and angiotensin III, and plays a role in maintaining homeostasis during pregnancy. May be involved in the inactivation of neuronal peptides in the brain. Cleaves Met-enkephalin and dynorphin. Binds angiotensin IV and may be the angiotensin IV receptor in the brain. The protein is Leucyl-cystinyl aminopeptidase (Lnpep) of Mus musculus (Mouse).